The sequence spans 250 residues: NAD(P)H-quinone oxidoreductase subunit S, chloroplastic (250 aa).

The N-terminal 48 residues, 1–48 (MATSSITIPTIRTPIHRSKFLGQTHQFSTVNRSVFPPPKQQSKLYQVK), are a transit peptide targeting the chloroplast. A Glycyl lysine isopeptide (Lys-Gly) (interchain with G-Cter in ubiquitin) cross-link involves residue Lys-52. 2 stretches are compositionally biased toward basic and acidic residues: residues 76-94 (QRNI…NETE) and 106-115 (VPEDGFEKEM). Disordered regions lie at residues 76-163 (QRNI…KPKA) and 222-250 (REKG…EAAP). The span at 136–146 (NPPPPPPPPPA) shows a compositional bias: pro residues.

In terms of assembly, part of the chloroplast NDH complex, composed of a mixture of chloroplast and nucleus encoded subunits. Component of the electron donor-binding subcomplex, at least composed of NDHS, NDHT and NDHU. Interacts with the NDH subcomplex A via the protein NDHT and NDHU. Post-translationally, arg-193 is the critical site for the high affinity binding of NDH to ferredoxin.

It is found in the plastid. The protein localises to the chloroplast thylakoid membrane. It carries out the reaction a plastoquinone + NADH + (n+1) H(+)(in) = a plastoquinol + NAD(+) + n H(+)(out). It catalyses the reaction a plastoquinone + NADPH + (n+1) H(+)(in) = a plastoquinol + NADP(+) + n H(+)(out). Its function is as follows. NDH shuttles electrons from NAD(P)H:plastoquinone, via FMN and iron-sulfur (Fe-S) centers, to quinones in the photosynthetic chain and possibly in a chloroplast respiratory chain. The immediate electron acceptor for the enzyme in this species is believed to be plastoquinone. Couples the redox reaction to proton translocation, and thus conserves the redox energy in a proton gradient. Required for the efficient operation of ferredoxin-dependent plastoquinone reduction. Forms the electron donor-binding subcomplex in association with the NDHT and NDHU subunits. This chain is NAD(P)H-quinone oxidoreductase subunit S, chloroplastic, found in Arabidopsis thaliana (Mouse-ear cress).